The primary structure comprises 1000 residues: Bifunctional glutamine synthetase adenylyltransferase/adenylyl-removing enzyme (1000 aa).

The adenylyl removase stretch occupies residues 1–481 (MTAPGRRSST…LHEKLFYRPL (481 aa)). An adenylyl transferase region spans residues 487-1000 (QLAPGEARLS…AVVDEQFYGA (514 aa)).

The protein belongs to the GlnE family. It depends on Mg(2+) as a cofactor.

The catalysed reaction is [glutamine synthetase]-O(4)-(5'-adenylyl)-L-tyrosine + phosphate = [glutamine synthetase]-L-tyrosine + ADP. It catalyses the reaction [glutamine synthetase]-L-tyrosine + ATP = [glutamine synthetase]-O(4)-(5'-adenylyl)-L-tyrosine + diphosphate. Functionally, involved in the regulation of glutamine synthetase GlnA, a key enzyme in the process to assimilate ammonia. When cellular nitrogen levels are high, the C-terminal adenylyl transferase (AT) inactivates GlnA by covalent transfer of an adenylyl group from ATP to specific tyrosine residue of GlnA, thus reducing its activity. Conversely, when nitrogen levels are low, the N-terminal adenylyl removase (AR) activates GlnA by removing the adenylyl group by phosphorolysis, increasing its activity. The regulatory region of GlnE binds the signal transduction protein PII (GlnB) which indicates the nitrogen status of the cell. The sequence is that of Bifunctional glutamine synthetase adenylyltransferase/adenylyl-removing enzyme from Streptomyces avermitilis (strain ATCC 31267 / DSM 46492 / JCM 5070 / NBRC 14893 / NCIMB 12804 / NRRL 8165 / MA-4680).